Reading from the N-terminus, the 590-residue chain is MKNTQAPSAMPIHKYRPFHEQIAVDLPDRTWPAKRIAVAPRWCAVDLRDGNQALIDPMSPERKRIMFDLLVRMGYKEIEVGFPSASQTDFDFVRSLIEENAIPDDVTIQVLTQAREHLIKRTYDSLVGAKRAIVHLYNSTSVLQREVVFRSDRQGIVDIALAGARLCRQFEALAPGTEIYYEYSPESYTGTELEFAADICNQALEVFEPTPERKVIINLPATVEMATPNVYADSIEWMSRHLNHRENVILSLHPHNDRGTAVAAAELGYLAGADRIEGCLFGNGERTGNVDLVTLGVNLFTQGIDPQIDFSDIDHIKRTVEHCNQLPVGERSPWGGDLVFTAFSGSHQDAIKKGFEAMAARAQRESVDVDDLVWAVPYLPIDPKDLGRSYEAVIRVNSQSGKGGVAYLLKSDHALDLPRKLQIEFSGVVQAKTDAEGGEVTSNEIWAIFQDEYLPAPETESDAKWGRFELGSTSTANENGDHVTLTVTLRDGETVSKATGEGNGPIAAFFDILNARGINVHLYDYSQHTLSASESATAAAYVEVNVDGRRLWGVGIDADTTTASFKAVISAVNRSVRASASSVPAELAGV.

Residues Pro40–Asp314 form the Pyruvate carboxyltransferase domain. Mg(2+)-binding residues include Asp49, His253, His255, and Asn289. Residues Ala456–Val590 are regulatory domain.

It belongs to the alpha-IPM synthase/homocitrate synthase family. LeuA type 2 subfamily. As to quaternary structure, homodimer. The cofactor is Mg(2+).

The protein resides in the cytoplasm. The enzyme catalyses 3-methyl-2-oxobutanoate + acetyl-CoA + H2O = (2S)-2-isopropylmalate + CoA + H(+). The protein operates within amino-acid biosynthesis; L-leucine biosynthesis; L-leucine from 3-methyl-2-oxobutanoate: step 1/4. Its function is as follows. Catalyzes the condensation of the acetyl group of acetyl-CoA with 3-methyl-2-oxobutanoate (2-ketoisovalerate) to form 3-carboxy-3-hydroxy-4-methylpentanoate (2-isopropylmalate). The polypeptide is 2-isopropylmalate synthase (Leifsonia xyli subsp. xyli (strain CTCB07)).